The chain runs to 355 residues: Uroporphyrinogen decarboxylase (355 aa).

Substrate is bound by residues 27–31 (RQAGR), aspartate 78, tyrosine 155, threonine 210, and histidine 328.

This sequence belongs to the uroporphyrinogen decarboxylase family. In terms of assembly, homodimer.

The protein resides in the cytoplasm. The enzyme catalyses uroporphyrinogen III + 4 H(+) = coproporphyrinogen III + 4 CO2. The protein operates within porphyrin-containing compound metabolism; protoporphyrin-IX biosynthesis; coproporphyrinogen-III from 5-aminolevulinate: step 4/4. Its function is as follows. Catalyzes the decarboxylation of four acetate groups of uroporphyrinogen-III to yield coproporphyrinogen-III. The sequence is that of Uroporphyrinogen decarboxylase from Pseudomonas fluorescens (strain Pf0-1).